The chain runs to 386 residues: Patatin-04/09 (386 aa).

A signal peptide spans 1 to 23 (MATTKSFLILFFMILATTSSTCA). Residues 32–229 (LSIDGGGIKG…TVGDPALLSL (198 aa)) enclose the PNPLA domain. A GXGXXG motif is present at residues 36-41 (GGGIKG). Residues 75–79 (GTSTG) carry the GXSXG motif. S77 acts as the Nucleophile in catalysis. N-linked (GlcNAc...) asparagine glycosylation occurs at N115. The active-site Proton acceptor is the D215. Positions 215–217 (DGG) match the DGA/G motif. Residues 321–384 (ENALNGTTTE…DRKKLRANKA (64 aa)) are a coiled coil. N-linked (GlcNAc...) asparagine glycosylation is present at N325.

Belongs to the patatin family. Tuber.

It is found in the vacuole. Its function is as follows. Probable lipolytic acyl hydrolase (LAH), an activity which is thought to be involved in the response of tubers to pathogens. The sequence is that of Patatin-04/09 from Solanum tuberosum (Potato).